A 490-amino-acid polypeptide reads, in one-letter code: RNA-binding protein P (490 aa).

The interval 1-112 (MGKKRKLDSK…EEEEAAERDA (112 aa)) is disordered. Positions 13-36 (AAARSAAARAAAAAAAAAAAAAVA) are enriched in low complexity. Acidic residues predominate over residues 74-108 (GGEEEEVEEVEVEEEVEVDEDEDGEGEGEEEEEAA). RRM domains follow at residues 156–233 (RKIF…LASV) and 267–343 (RKIF…QKAI).

Forms homodimers. Interacts with RBP-L and RBP-208. Interacts with NSF.

It is found in the nucleus. Its subcellular location is the cytoplasm. Functionally, RNA-binding protein that binds to a cis-localization element or zipcode, within the 5'-CDS of prolamine RNA. Binds strongly to glutelin mRNA, particularly to 3'-UTR and zipcode RNA. Recognizes and binds to glutelin zipcode RNA, which is required for proper mRNA localization to cisternal endoplasmic reticulum. Exhibits strong binding activity to a glutelin intron sequence and may participate in mRNA splicing. Required for the correct localization of glutelin and prolamine mRNA in endosperm cells during grain development. RBP-P and RBP-L form a quaternary complex with the membrane trafficking factors NSF and RAB5A. This quaternay complex carries glutelin mRNAs for active transport on endosomes to the cortical endoplasmic reticulum membrane, and enables endosome-mediated glutelin mRNA transport in endosperm cells. The protein is RNA-binding protein P of Oryza sativa subsp. japonica (Rice).